We begin with the raw amino-acid sequence, 309 residues long: MTPSAPSQPVRVAALYRFARLDAFEALRAPLAAFCCGRGIKGTLLLAHEGINGTVAGSEEAIAELIDHIEAIDGLAGLEVKFSSATDMPFHRMKVRLKREIVTMGVEDIDPATSAGTYVAPADWNALISEPGTIVIDTRNTYEVSIGTFKGAVDPATASFREFPAWVEAHRAELEGRKVAMFCTGGIRCEKATAYVKSLGFEDVFHLKGGILKYLEEVPAEQSLWQGECFVFDERVSVSHGLAEGDAELCRACRHPLTASELTSPRYAAGVSCPHCFDARTDEDRQRYAERQRQVELAQARGKRPHIGS.

In terms of domain architecture, Rhodanese spans 129-223 (SEPGTIVIDT…YLEEVPAEQS (95 aa)). Residue Cys-183 is the Cysteine persulfide intermediate of the active site. The tract at residues 288–309 (YAERQRQVELAQARGKRPHIGS) is disordered.

It belongs to the TrhO family.

The enzyme catalyses uridine(34) in tRNA + AH2 + O2 = 5-hydroxyuridine(34) in tRNA + A + H2O. Catalyzes oxygen-dependent 5-hydroxyuridine (ho5U) modification at position 34 in tRNAs. The polypeptide is tRNA uridine(34) hydroxylase (Mesorhizobium japonicum (strain LMG 29417 / CECT 9101 / MAFF 303099) (Mesorhizobium loti (strain MAFF 303099))).